Consider the following 576-residue polypeptide: Nuclear protein localization protein 4 homolog (576 aa).

Disordered regions lie at residues 67–96 and 200–219; these read LHLV…NNIS and QDDN…IKKS. The segment covering 72-94 has biased composition (low complexity); the sequence is NNNNNNNDNKASSGSNNNNNNNN. Residues 208-218 show a composition bias toward basic and acidic residues; the sequence is KDNKDNSEIKK. The MPN domain occupies 295–430; the sequence is GALVDFQSAN…MEAFQVSDQA (136 aa).

The protein belongs to the NPL4 family.

The protein operates within protein degradation; proteasomal ubiquitin-dependent pathway. Its function is as follows. May be part of a complex that binds ubiquitinated proteins and that is necessary for the export of misfolded proteins from the ER to the cytoplasm, where they are degraded by the proteasome. The sequence is that of Nuclear protein localization protein 4 homolog (nploc4) from Dictyostelium discoideum (Social amoeba).